The chain runs to 1064 residues: Error-prone DNA polymerase (1064 aa).

It belongs to the DNA polymerase type-C family. DnaE2 subfamily.

It is found in the cytoplasm. It catalyses the reaction DNA(n) + a 2'-deoxyribonucleoside 5'-triphosphate = DNA(n+1) + diphosphate. Its function is as follows. DNA polymerase involved in damage-induced mutagenesis and translesion synthesis (TLS). It is not the major replicative DNA polymerase. This chain is Error-prone DNA polymerase, found in Azoarcus sp. (strain BH72).